We begin with the raw amino-acid sequence, 645 residues long: Acetyl-coenzyme A synthetase (645 aa).

CoA is bound by residues 190-193 (RGSK), threonine 308, and asparagine 332. ATP is bound by residues 384–386 (GEP), 408–413 (DTWWQT), aspartate 497, and arginine 512. Serine 520 lines the CoA pocket. Arginine 523 contributes to the ATP binding site. Residues valine 534, histidine 536, and valine 539 each coordinate Mg(2+). Arginine 581 provides a ligand contact to CoA. Lysine 606 carries the N6-acetyllysine modification.

Belongs to the ATP-dependent AMP-binding enzyme family. It depends on Mg(2+) as a cofactor. In terms of processing, acetylated. Deacetylation by the SIR2-homolog deacetylase activates the enzyme.

It carries out the reaction acetate + ATP + CoA = acetyl-CoA + AMP + diphosphate. Its function is as follows. Catalyzes the conversion of acetate into acetyl-CoA (AcCoA), an essential intermediate at the junction of anabolic and catabolic pathways. AcsA undergoes a two-step reaction. In the first half reaction, AcsA combines acetate with ATP to form acetyl-adenylate (AcAMP) intermediate. In the second half reaction, it can then transfer the acetyl group from AcAMP to the sulfhydryl group of CoA, forming the product AcCoA. This Bdellovibrio bacteriovorus (strain ATCC 15356 / DSM 50701 / NCIMB 9529 / HD100) protein is Acetyl-coenzyme A synthetase.